We begin with the raw amino-acid sequence, 311 residues long: Pyrimidine-specific ribonucleoside hydrolase RihA (311 aa).

His-240 is a catalytic residue.

The protein belongs to the IUNH family. RihA subfamily.

In terms of biological role, hydrolyzes with equal efficiency cytidine or uridine to ribose and cytosine or uracil, respectively. This chain is Pyrimidine-specific ribonucleoside hydrolase RihA, found in Escherichia coli O157:H7.